The following is a 150-amino-acid chain: Ribonuclease K6 (150 aa).

The signal sequence occupies residues M1–A23. H38 acts as the Proton acceptor in catalysis. 4 disulfides stabilise this stretch: C46–C104, C60–C114, C78–C129, and C85–C92. Residues K61–T65 and K86 each bind substrate. Residue N100 is glycosylated (N-linked (GlcNAc...) asparagine). R105 is a substrate binding site. The Proton donor role is filled by H145.

Belongs to the pancreatic ribonuclease family. Interacts (via N-terminus) with bacterial lipopolysaccharide (LPS).

The protein resides in the secreted. Its subcellular location is the lysosome. It localises to the cytoplasmic granule. Ribonuclease which shows a preference for the pyrimidines uridine and cytosine. Has potent antibacterial activity against a range of Gram-positive and Gram-negative bacteria, including P.aeruginosa, A.baumanii, M.luteus, S.aureus, E.faecalis, E.faecium, S.saprophyticus and E.coli. Causes loss of bacterial membrane integrity, and also promotes agglutination of Gram-negative bacteria. Probably contributes to urinary tract sterility. Bactericidal activity is independent of RNase activity. The sequence is that of Ribonuclease K6 (RNASE6) from Pan troglodytes (Chimpanzee).